A 354-amino-acid polypeptide reads, in one-letter code: Uroporphyrinogen decarboxylase (354 aa).

Substrate is bound by residues 27–31 (RQAGR), Asp77, Tyr154, Thr209, and His327.

Belongs to the uroporphyrinogen decarboxylase family. Homodimer.

The protein localises to the cytoplasm. It catalyses the reaction uroporphyrinogen III + 4 H(+) = coproporphyrinogen III + 4 CO2. It functions in the pathway porphyrin-containing compound metabolism; protoporphyrin-IX biosynthesis; coproporphyrinogen-III from 5-aminolevulinate: step 4/4. Its function is as follows. Catalyzes the decarboxylation of four acetate groups of uroporphyrinogen-III to yield coproporphyrinogen-III. The protein is Uroporphyrinogen decarboxylase of Salmonella dublin (strain CT_02021853).